A 261-amino-acid polypeptide reads, in one-letter code: Epidermal growth factor-binding protein type B (261 aa).

The N-terminal stretch at 1 to 16 is a signal peptide; that stretch reads MWFLILFLALSLGGID. Residues 17 to 24 constitute a propeptide, activation peptide; that stretch reads AAPPLQSR. Residues 25–258 form the Peptidase S1 domain; sequence VVGGFNCKKN…FNSWIKDTMM (234 aa). 5 disulfide bridges follow: C31-C173, C50-C66, C152-C219, C184-C198, and C209-C234. H65 (charge relay system) is an active-site residue. N102 carries N-linked (GlcNAc...) asparagine glycosylation. D120 serves as the catalytic Charge relay system. S213 acts as the Charge relay system in catalysis.

Belongs to the peptidase S1 family. Kallikrein subfamily.

It catalyses the reaction Hydrolyzes mouse Ren2 protein (a species of prorenin present in the submandibular gland) on the carboxy side of the arginine residue at the Lys-Arg-|- pair in the N-terminus, to yield mature renin.. Functionally, cleaves REN2 at a dibasic site to yield mature renin. The chain is Epidermal growth factor-binding protein type B (Egfbp2) from Mus musculus (Mouse).